We begin with the raw amino-acid sequence, 88 residues long: Kunitz-type U15-theraphotoxin-Hhn1e (88 aa).

The N-terminal stretch at 1–27 (MGTARFLRAVLLLSVLLMVTFPALLSA) is a signal peptide. Residues 28–33 (EHHDGR) constitute a propeptide that is removed on maturation. Residues 37–85 (CRLPSDSGDCLRFFEMWYFDGTTCTKFVYGGYGGNDNRFPTKKACMKRC) form the BPTI/Kunitz inhibitor domain. Disulfide bonds link cysteine 37–cysteine 85 and cysteine 60–cysteine 81.

This sequence belongs to the venom Kunitz-type family. 03 (sub-Kunitz) subfamily. In terms of tissue distribution, expressed by the venom gland.

Its subcellular location is the secreted. In terms of biological role, serine protease inhibitor that inhibits trypsin at a molar ratio of 1:1. The chain is Kunitz-type U15-theraphotoxin-Hhn1e from Cyriopagopus hainanus (Chinese bird spider).